A 381-amino-acid chain; its full sequence is UDP-N-acetylglucosamine--N-acetylmuramyl-(pentapeptide) pyrophosphoryl-undecaprenol N-acetylglucosamine transferase (381 aa).

Residues 10 to 12 (TGG), Asn124, Arg165, Ser207, Ile263, and Gln308 each bind UDP-N-acetyl-alpha-D-glucosamine.

The protein belongs to the glycosyltransferase 28 family. MurG subfamily.

Its subcellular location is the cell inner membrane. It carries out the reaction di-trans,octa-cis-undecaprenyl diphospho-N-acetyl-alpha-D-muramoyl-L-alanyl-D-glutamyl-meso-2,6-diaminopimeloyl-D-alanyl-D-alanine + UDP-N-acetyl-alpha-D-glucosamine = di-trans,octa-cis-undecaprenyl diphospho-[N-acetyl-alpha-D-glucosaminyl-(1-&gt;4)]-N-acetyl-alpha-D-muramoyl-L-alanyl-D-glutamyl-meso-2,6-diaminopimeloyl-D-alanyl-D-alanine + UDP + H(+). It functions in the pathway cell wall biogenesis; peptidoglycan biosynthesis. Functionally, cell wall formation. Catalyzes the transfer of a GlcNAc subunit on undecaprenyl-pyrophosphoryl-MurNAc-pentapeptide (lipid intermediate I) to form undecaprenyl-pyrophosphoryl-MurNAc-(pentapeptide)GlcNAc (lipid intermediate II). This chain is UDP-N-acetylglucosamine--N-acetylmuramyl-(pentapeptide) pyrophosphoryl-undecaprenol N-acetylglucosamine transferase, found in Trichlorobacter lovleyi (strain ATCC BAA-1151 / DSM 17278 / SZ) (Geobacter lovleyi).